A 239-amino-acid polypeptide reads, in one-letter code: Ribonuclease 3 (239 aa).

Residues 12-137 (RAKLEGLIGH…LIAAIYLDGG (126 aa)) enclose the RNase III domain. Glu50 serves as a coordination point for Mg(2+). Asp54 is a catalytic residue. Mg(2+) contacts are provided by Asp123 and Glu126. Glu126 is a catalytic residue. The DRBM domain maps to 162–231 (DAKTELQEWS…ATKMLEREGI (70 aa)).

The protein belongs to the ribonuclease III family. As to quaternary structure, homodimer. Requires Mg(2+) as cofactor.

It localises to the cytoplasm. The catalysed reaction is Endonucleolytic cleavage to 5'-phosphomonoester.. Digests double-stranded RNA. Involved in the processing of primary rRNA transcript to yield the immediate precursors to the large and small rRNAs (23S and 16S). Processes some mRNAs, and tRNAs when they are encoded in the rRNA operon. Processes pre-crRNA and tracrRNA of type II CRISPR loci if present in the organism. In Rhizobium johnstonii (strain DSM 114642 / LMG 32736 / 3841) (Rhizobium leguminosarum bv. viciae), this protein is Ribonuclease 3.